A 122-amino-acid polypeptide reads, in one-letter code: Small ribosomal subunit protein uS13 (122 aa).

The segment at 99 to 122 (RGQRTHTNARTRKGPAKAIAGKKK) is disordered.

This sequence belongs to the universal ribosomal protein uS13 family. Part of the 30S ribosomal subunit. Forms a loose heterodimer with protein S19. Forms two bridges to the 50S subunit in the 70S ribosome.

Located at the top of the head of the 30S subunit, it contacts several helices of the 16S rRNA. In the 70S ribosome it contacts the 23S rRNA (bridge B1a) and protein L5 of the 50S subunit (bridge B1b), connecting the 2 subunits; these bridges are implicated in subunit movement. Contacts the tRNAs in the A and P-sites. This Rhodopseudomonas palustris (strain TIE-1) protein is Small ribosomal subunit protein uS13.